Here is a 304-residue protein sequence, read N- to C-terminus: ULP1-interacting protein 4 (304 aa).

Residues 72–269 (DEYPKEVDEH…SIVKEGDANT (198 aa)) are disordered. Residues 73-83 (EYPKEVDEHSN) are compositionally biased toward basic and acidic residues. Over residues 129-149 (TPSLKGNVTFPSPKTAISQDG) the composition is skewed to polar residues. Serine 140 is modified (phosphoserine). Residues 155-183 (ETTRKERKYEHAPLNEVPVERDPKEENKE) show a composition bias toward basic and acidic residues. A phosphoserine mark is found at serine 185 and serine 205.

In terms of assembly, interacts with ULP1.

It localises to the endoplasmic reticulum membrane. The protein localises to the mitochondrion outer membrane. It is found in the nucleus envelope. This is ULP1-interacting protein 4 (UIP4) from Saccharomyces cerevisiae (strain ATCC 204508 / S288c) (Baker's yeast).